A 257-amino-acid chain; its full sequence is Snake venom serine protease KN1 (257 aa).

Residues 1-18 form the signal peptide; it reads MVLIRVLANLLILQLSYA. A propeptide spanning residues 19 to 24 is cleaved from the precursor; that stretch reads QKSSEL. Residues 25-248 form the Peptidase S1 domain; it reads VVGGHPCNIN…HLDWIKSIIA (224 aa). 5 disulfides stabilise this stretch: C31/C162, C49/C65, C141/C209, C173/C188, and C199/C224. H64 (charge relay system) is an active-site residue. N-linked (GlcNAc...) asparagine glycosylation is present at N102. D109 functions as the Charge relay system in the catalytic mechanism. N-linked (GlcNAc...) asparagine glycans are attached at residues N120 and N121. Catalysis depends on S203, which acts as the Charge relay system.

The protein belongs to the peptidase S1 family. Snake venom subfamily. As to quaternary structure, monomer. Expressed by the venom gland.

Its subcellular location is the secreted. In terms of biological role, snake venom serine protease that may act in the hemostasis system of the prey. This chain is Snake venom serine protease KN1, found in Trimeresurus stejnegeri (Chinese green tree viper).